The primary structure comprises 333 residues: Taste receptor type 2 member 38 (333 aa).

Topologically, residues 1–17 (MLTLTRICAVSYEVRST) are extracellular. A helical membrane pass occupies residues 18 to 38 (FLFISVLEFAVGFLTNAFIFL). Topologically, residues 39 to 55 (VNFWDVVKRQPLSNSDC) are cytoplasmic. Residues 56–76 (VLLCLSISRLFLHGLLFLSAI) traverse the membrane as a helical segment. At 77–94 (QLTHFQKLSEPLNHSYQA) the chain is on the extracellular side. The helical transmembrane segment at 95–115 (IIMLWIIANQANLWLAACLSL) threads the bilayer. Residues 116-142 (LYCSKLIRFSHTFLICLASWVSRKISQ) lie on the Cytoplasmic side of the membrane. A helical transmembrane segment spans residues 143 to 163 (MLLGIILCSCICTVLCVWCFF). At 164–190 (SRPHFTVTTFLFMNNNTRLNWQIKDLN) the chain is on the extracellular side. Asn178 carries N-linked (GlcNAc...) asparagine glycosylation. Residues 191-211 (LFYSFLFCYLWSVPPFLLFLV) traverse the membrane as a helical segment. Topologically, residues 212–251 (SSGMLTVSLGRHMRTMKVYTRDSRDPSLEAHIKALKSLVS) are cytoplasmic. A helical membrane pass occupies residues 252-272 (FFCFFVISSCAAFISVPLLIL). Residues 273–276 (WRNK) are Extracellular-facing. A helical membrane pass occupies residues 277–297 (IGVMVCVGIMAACPSGHAAVL). Residues 298–333 (ISGNATLRRAVTTILLWAQSSMKVRADHKADSRTLC) lie on the Cytoplasmic side of the membrane.

It belongs to the G-protein coupled receptor T2R family.

The protein resides in the membrane. In terms of biological role, receptor that may play a role in the perception of bitterness and is gustducin-linked. May play a role in sensing the chemical composition of the gastrointestinal content. The activity of this receptor may stimulate alpha gustducin, mediate PLC-beta-2 activation and lead to the gating of TRPM5. The chain is Taste receptor type 2 member 38 (TAS2R38) from Pongo pygmaeus (Bornean orangutan).